Here is a 1023-residue protein sequence, read N- to C-terminus: Protein FAM13A (1023 aa).

Residues 43–231 (VSLQELERQG…KILENYNTLF (189 aa)) enclose the Rho-GAP domain. The tract at residues 269–290 (LERDMPKPPPKTKIPKSRSEGS) is disordered. Phosphoserine is present on Ser345. Disordered regions lie at residues 381–437 (VNNS…SGFN) and 459–562 (CAGE…EVPQ). Positions 384 to 405 (SGGQSSEDSESGTLSASSATSA) are enriched in low complexity. Basic and acidic residues-rich tracts occupy residues 412–427 (SKEQDEVRHGRDKGLI) and 509–524 (SDERKGNEKDGGHTQH). A compositionally biased stretch (polar residues) spans 536–549 (PSLSDTKQQRNQDA). Phosphoserine occurs at positions 597 and 617. 2 disordered regions span residues 628 to 663 (QYLDDTEVPPSPPNSHSFMRRRSSSLGSYDDEQEDL) and 726 to 759 (ISEEDLTPRMRQRSNTLPKSFGSQLEKEDEKKQE). The stretch at 666 to 730 (AQLTRRIQSL…ESKLKISEED (65 aa)) forms a coiled coil. At Ser727 the chain carries Phosphoserine. The residue at position 732 (Thr732) is a Phosphothreonine. The segment covering 738 to 748 (RSNTLPKSFGS) has biased composition (polar residues). Residues 750–759 (LEKEDEKKQE) are compositionally biased toward basic and acidic residues. A coiled-coil region spans residues 946-978 (ASIPELLEHLQEMREEKKRIRKKLRDFEDNFFR).

The protein belongs to the FAM13 family. In terms of tissue distribution, isoform 1 is widely expressed, with highest expression in skeletal muscle, thymus, brain and lung. Isoform 3 is less abundant than isoform 1 and predominantly expressed in kidney, pancreas, liver, lung and thymus.

The chain is Protein FAM13A (FAM13A) from Homo sapiens (Human).